The following is a 339-amino-acid chain: RNA 3'-terminal phosphate cyclase (339 aa).

ATP contacts are provided by residues Gln103 and 283–287; that span reads HLADQ. His308 functions as the Tele-AMP-histidine intermediate in the catalytic mechanism.

It belongs to the RNA 3'-terminal cyclase family. Type 1 subfamily.

Its subcellular location is the cytoplasm. The catalysed reaction is a 3'-end 3'-phospho-ribonucleotide-RNA + ATP = a 3'-end 2',3'-cyclophospho-ribonucleotide-RNA + AMP + diphosphate. Functionally, catalyzes the conversion of 3'-phosphate to a 2',3'-cyclic phosphodiester at the end of RNA. The mechanism of action of the enzyme occurs in 3 steps: (A) adenylation of the enzyme by ATP; (B) transfer of adenylate to an RNA-N3'P to produce RNA-N3'PP5'A; (C) and attack of the adjacent 2'-hydroxyl on the 3'-phosphorus in the diester linkage to produce the cyclic end product. The biological role of this enzyme is unknown but it is likely to function in some aspects of cellular RNA processing. This Salmonella enteritidis PT4 (strain P125109) protein is RNA 3'-terminal phosphate cyclase.